The chain runs to 316 residues: Porphobilinogen deaminase (316 aa).

The residue at position 245 (C245) is an S-(dipyrrolylmethanemethyl)cysteine.

This sequence belongs to the HMBS family. Monomer. Dipyrromethane is required as a cofactor.

The catalysed reaction is 4 porphobilinogen + H2O = hydroxymethylbilane + 4 NH4(+). The protein operates within porphyrin-containing compound metabolism; protoporphyrin-IX biosynthesis; coproporphyrinogen-III from 5-aminolevulinate: step 2/4. It participates in porphyrin-containing compound metabolism; chlorophyll biosynthesis. Tetrapolymerization of the monopyrrole PBG into the hydroxymethylbilane pre-uroporphyrinogen in several discrete steps. The chain is Porphobilinogen deaminase from Prochlorococcus marinus (strain MIT 9312).